The primary structure comprises 248 residues: Probable transcriptional regulatory protein Acid_5948 (248 aa).

This sequence belongs to the TACO1 family.

Its subcellular location is the cytoplasm. The polypeptide is Probable transcriptional regulatory protein Acid_5948 (Solibacter usitatus (strain Ellin6076)).